The chain runs to 475 residues: Ankyrin repeat, SAM and basic leucine zipper domain-containing protein 1 (475 aa).

Residues methionine 1–glycine 24 are disordered. Phosphoserine is present on residues serine 17, serine 18, and serine 20. ANK repeat units follow at residues glutamate 45–serine 74, tyrosine 78–phenylalanine 107, aspartate 110–valine 144, arginine 148–threonine 177, asparagine 181–leucine 210, and aspartate 214–glycine 243. Positions serine 272–glutamine 334 constitute an SAM domain.

Interacts with DDX4, PIWIL1, RANBP9 and TDRD1.

It is found in the cytoplasm. Its function is as follows. Plays a central role during spermatogenesis by repressing transposable elements and preventing their mobilization, which is essential for the germline integrity. Acts via the piRNA metabolic process, which mediates the repression of transposable elements during meiosis by forming complexes composed of piRNAs and Piwi proteins and governs the methylation and subsequent repression of transposons. Its association with pi-bodies suggests a participation in the primary piRNAs metabolic process. Required prior to the pachytene stage to facilitate the production of multiple types of piRNAs, including those associated with repeats involved in the regulation of retrotransposons. May act by mediating protein-protein interactions during germ cell maturation. This chain is Ankyrin repeat, SAM and basic leucine zipper domain-containing protein 1 (ASZ1), found in Gorilla gorilla gorilla (Western lowland gorilla).